The sequence spans 330 residues: Complement factor H-related protein 3 (330 aa).

Positions 1–18 (MLLLINVILTLWVSCANG) are cleaved as a signal peptide. 5 Sushi domains span residues 22–84 (PCDF…VPCL), 85–142 (RKCY…RCIR), 144–205 (RTCS…ICIN), 208–266 (EKCG…RCIH), and 267–330 (PCII…PRCE). Intrachain disulfides connect Cys23/Cys72, Cys55/Cys83, Cys87/Cys129, Cys114/Cys140, Cys146/Cys192, and Cys175/Cys203. Asn108 carries N-linked (GlcNAc...) asparagine glycosylation. N-linked (GlcNAc...) asparagine glycans are attached at residues Asn185 and Asn205. 4 disulfides stabilise this stretch: Cys210/Cys253, Cys239/Cys264, Cys268/Cys319, and Cys302/Cys329. Asn309 carries an N-linked (GlcNAc...) asparagine glycan.

As to expression, expressed by the liver and secreted in plasma.

Its subcellular location is the secreted. Functionally, might be involved in complement regulation. This Homo sapiens (Human) protein is Complement factor H-related protein 3 (CFHR3).